The chain runs to 133 residues: Small ribosomal subunit protein uS11 (133 aa).

The protein belongs to the universal ribosomal protein uS11 family. In terms of assembly, part of the 30S ribosomal subunit. Interacts with proteins S7 and S18. Binds to IF-3.

Located on the platform of the 30S subunit, it bridges several disparate RNA helices of the 16S rRNA. Forms part of the Shine-Dalgarno cleft in the 70S ribosome. This is Small ribosomal subunit protein uS11 from Chlamydia pneumoniae (Chlamydophila pneumoniae).